The chain runs to 468 residues: Argininosuccinate lyase (468 aa).

The protein belongs to the lyase 1 family. Argininosuccinate lyase subfamily.

The protein resides in the cytoplasm. It catalyses the reaction 2-(N(omega)-L-arginino)succinate = fumarate + L-arginine. The protein operates within amino-acid biosynthesis; L-arginine biosynthesis; L-arginine from L-ornithine and carbamoyl phosphate: step 3/3. The protein is Argininosuccinate lyase of Zymomonas mobilis subsp. mobilis (strain ATCC 31821 / ZM4 / CP4).